Reading from the N-terminus, the 454-residue chain is Ribosomal protein uS12 methylthiotransferase RimO (454 aa).

Residues 19-129 (AKVGFVSLGC…VLAQVHEHVA (111 aa)) form the MTTase N-terminal domain. Residues Cys-28, Cys-64, Cys-93, Cys-161, Cys-165, and Cys-168 each contribute to the [4Fe-4S] cluster site. A Radical SAM core domain is found at 147–384 (LTPKHYAYLK…MAVQAKISSD (238 aa)). Residues 387–453 (QVRIGQEYLI…EHDVWGVRVE (67 aa)) enclose the TRAM domain.

Belongs to the methylthiotransferase family. RimO subfamily. [4Fe-4S] cluster serves as cofactor.

It is found in the cytoplasm. The catalysed reaction is L-aspartate(89)-[ribosomal protein uS12]-hydrogen + (sulfur carrier)-SH + AH2 + 2 S-adenosyl-L-methionine = 3-methylsulfanyl-L-aspartate(89)-[ribosomal protein uS12]-hydrogen + (sulfur carrier)-H + 5'-deoxyadenosine + L-methionine + A + S-adenosyl-L-homocysteine + 2 H(+). In terms of biological role, catalyzes the methylthiolation of an aspartic acid residue of ribosomal protein uS12. In Colwellia psychrerythraea (strain 34H / ATCC BAA-681) (Vibrio psychroerythus), this protein is Ribosomal protein uS12 methylthiotransferase RimO.